The sequence spans 96 residues: Putative septation protein SpoVG (96 aa).

The protein belongs to the SpoVG family.

Its function is as follows. Could be involved in septation. The protein is Putative septation protein SpoVG of Geobacillus sp. (strain WCH70).